We begin with the raw amino-acid sequence, 295 residues long: Pyridoxal 5'-phosphate synthase subunit PdxS (295 aa).

Asp-25 is a binding site for D-ribose 5-phosphate. The Schiff-base intermediate with D-ribose 5-phosphate role is filled by Lys-82. Gly-154 is a binding site for D-ribose 5-phosphate. Arg-166 provides a ligand contact to D-glyceraldehyde 3-phosphate. Residues Gly-215 and 236-237 (GS) each bind D-ribose 5-phosphate.

The protein belongs to the PdxS/SNZ family. In terms of assembly, in the presence of PdxT, forms a dodecamer of heterodimers.

It carries out the reaction aldehydo-D-ribose 5-phosphate + D-glyceraldehyde 3-phosphate + L-glutamine = pyridoxal 5'-phosphate + L-glutamate + phosphate + 3 H2O + H(+). It participates in cofactor biosynthesis; pyridoxal 5'-phosphate biosynthesis. In terms of biological role, catalyzes the formation of pyridoxal 5'-phosphate from ribose 5-phosphate (RBP), glyceraldehyde 3-phosphate (G3P) and ammonia. The ammonia is provided by the PdxT subunit. Can also use ribulose 5-phosphate and dihydroxyacetone phosphate as substrates, resulting from enzyme-catalyzed isomerization of RBP and G3P, respectively. The polypeptide is Pyridoxal 5'-phosphate synthase subunit PdxS (Listeria monocytogenes serotype 4b (strain CLIP80459)).